A 435-amino-acid polypeptide reads, in one-letter code: MSIITDVYAREVLDSRGNPTLEVEVYTESGAFGRGMVPSGASTGEHEAVELRDGDKSRYGGLGTQKAVDNVNNVIAEAIIGYDVRDQQAIDRAMIALDGTPNKGKLGANAILGVSIAVARAAADYLEVPLYSYLGGFNTKVLPTPMMNIINGGSHSDAPIAFQEFMIMPVGAPTFKEALRWGAEVFHALKKILKERGLETAVGDEGGFAPKFEGTEDGVETILKAIEAAGYEAGENGIMIGFDCASSEFYDAERKVYDYSKFEGEGGAVRTAAEQIDYLEELVNKYPIITIEDGMDENDWDGWKALTERLGGRVQLVGDDFFVTNTDYLARGIKEEAANSILIKVNQIGTLTETFEAIEMAKEAGYTAVVSHRSGETEDSTIADIAVATNAGQIKTGSLSRTDRIAKYNQLLRIEDQLGEVAQYKGIKSFYNLKK.

Glutamine 163 contributes to the (2R)-2-phosphoglycerate binding site. The active-site Proton donor is the glutamate 205. Positions 243, 292, and 319 each coordinate Mg(2+). The (2R)-2-phosphoglycerate site is built by lysine 344, arginine 373, serine 374, and lysine 395. Lysine 344 serves as the catalytic Proton acceptor.

The protein belongs to the enolase family. Mg(2+) serves as cofactor.

It is found in the cytoplasm. The protein localises to the secreted. Its subcellular location is the cell surface. The catalysed reaction is (2R)-2-phosphoglycerate = phosphoenolpyruvate + H2O. It participates in carbohydrate degradation; glycolysis; pyruvate from D-glyceraldehyde 3-phosphate: step 4/5. Its function is as follows. Catalyzes the reversible conversion of 2-phosphoglycerate (2-PG) into phosphoenolpyruvate (PEP). It is essential for the degradation of carbohydrates via glycolysis. The sequence is that of Enolase from Streptococcus agalactiae serotype Ia (strain ATCC 27591 / A909 / CDC SS700).